The chain runs to 684 residues: DNA ligase (684 aa).

NAD(+) contacts are provided by residues D46–D50, S100–L101, and E130. K132 acts as the N6-AMP-lysine intermediate in catalysis. R153, E187, K303, and K327 together coordinate NAD(+). Zn(2+) contacts are provided by C421, C424, C439, and C444. Positions D604–K684 constitute a BRCT domain.

It belongs to the NAD-dependent DNA ligase family. LigA subfamily. Mg(2+) is required as a cofactor. It depends on Mn(2+) as a cofactor.

The enzyme catalyses NAD(+) + (deoxyribonucleotide)n-3'-hydroxyl + 5'-phospho-(deoxyribonucleotide)m = (deoxyribonucleotide)n+m + AMP + beta-nicotinamide D-nucleotide.. Functionally, DNA ligase that catalyzes the formation of phosphodiester linkages between 5'-phosphoryl and 3'-hydroxyl groups in double-stranded DNA using NAD as a coenzyme and as the energy source for the reaction. It is essential for DNA replication and repair of damaged DNA. The polypeptide is DNA ligase (Oenococcus oeni (strain ATCC BAA-331 / PSU-1)).